The chain runs to 233 residues: Ribose-5-phosphate isomerase A (233 aa).

Residues 28 to 31 (SGST), 83 to 86 (DGAD), and 96 to 99 (KGGG) each bind substrate. E105 serves as the catalytic Proton acceptor. A substrate-binding site is contributed by K123.

It belongs to the ribose 5-phosphate isomerase family. In terms of assembly, homodimer.

The enzyme catalyses aldehydo-D-ribose 5-phosphate = D-ribulose 5-phosphate. The protein operates within carbohydrate degradation; pentose phosphate pathway; D-ribose 5-phosphate from D-ribulose 5-phosphate (non-oxidative stage): step 1/1. Its function is as follows. Catalyzes the reversible conversion of ribose-5-phosphate to ribulose 5-phosphate. The protein is Ribose-5-phosphate isomerase A of Bartonella bacilliformis (strain ATCC 35685 / KC583 / Herrer 020/F12,63).